The chain runs to 341 residues: Mitochondrial glutathione transporter SLC25A40 (341 aa).

Solcar repeat units lie at residues 14–132 (ITPS…LRDI), 140–224 (RAEI…VKQS), and 234–328 (PTFA…GKSF). The next 6 membrane-spanning stretches (helical) occupy residues 20-40 (MIAS…LDVV), 104-124 (LWSG…IYFT), 143-163 (IASL…ISPL), 200-221 (WGPT…YELV), 236-256 (FAIS…VTLP), and 299-319 (GLFA…AIMI).

The protein belongs to the mitochondrial carrier (TC 2.A.29) family.

The protein localises to the mitochondrion inner membrane. The catalysed reaction is glutathione(in) = glutathione(out). Probable mitochondrial transporter required for glutathione import into mitochondria. Glutathione, which plays key roles in oxidative metabolism, is produced exclusively in the cytosol and is imported in many organelles. Mitochondrial glutathione is required for the activity and stability of proteins containing iron-sulfur clusters. In Xenopus tropicalis (Western clawed frog), this protein is Mitochondrial glutathione transporter SLC25A40.